The following is a 317-amino-acid chain: Dehydrogenase/reductase SDR family member 12 (317 aa).

Residues Ser-50 and Ile-52 each contribute to the NAD(+) site. Ser-175 provides a ligand contact to substrate. NAD(+) is bound by residues Tyr-201, Lys-205, and Thr-234. The active-site Proton acceptor is Tyr-201.

It belongs to the short-chain dehydrogenases/reductases (SDR) family.

In terms of biological role, putative oxidoreductase. The chain is Dehydrogenase/reductase SDR family member 12 (DHRS12) from Bos taurus (Bovine).